A 189-amino-acid chain; its full sequence is Elongation factor P (189 aa).

The protein belongs to the elongation factor P family.

It is found in the cytoplasm. It functions in the pathway protein biosynthesis; polypeptide chain elongation. In terms of biological role, involved in peptide bond synthesis. Stimulates efficient translation and peptide-bond synthesis on native or reconstituted 70S ribosomes in vitro. Probably functions indirectly by altering the affinity of the ribosome for aminoacyl-tRNA, thus increasing their reactivity as acceptors for peptidyl transferase. The chain is Elongation factor P from Rhizobium etli (strain CIAT 652).